The primary structure comprises 43 residues: Snaclec lebecetin subunit beta (43 aa).

Residues Ala-1 to Val-43 form the C-type lectin domain. An intrachain disulfide couples Cys-4 to Cys-16.

In terms of assembly, heterodimer of subunits alpha and beta; disulfide-linked. Ca(2+) serves as cofactor. In terms of processing, glycosylated. In terms of tissue distribution, expressed by the venom gland.

It is found in the secreted. Binds to the platelet GPIb/IX/V receptor system and inhibits ristocetin-induced platelet aggregation in human platelet-rich plasma. Strongly inhibits platelet aggregation induced by ADP, calcium ionophore, thrombin and collagen. Does not inhibit U46619-induced platelet aggregation. The sequence is that of Snaclec lebecetin subunit beta from Macrovipera lebetinus (Levantine viper).